A 378-amino-acid polypeptide reads, in one-letter code: Histidine decarboxylase (378 aa).

His120 serves as a coordination point for substrate. Lys233 bears the N6-(pyridoxal phosphate)lysine mark. Residue Ser323 is part of the active site.

It belongs to the group II decarboxylase family. Homotetramer. Pyridoxal 5'-phosphate is required as a cofactor.

The enzyme catalyses L-histidine + H(+) = histamine + CO2. The sequence is that of Histidine decarboxylase (hdc) from Morganella morganii (Proteus morganii).